We begin with the raw amino-acid sequence, 1215 residues long: Chromosome segregation protein sudA (1215 aa).

32–39 (GRNGSGKS) provides a ligand contact to ATP. Residues 177 to 522 (KIMHETNSKR…LSQMMDHNTS (346 aa)) are a coiled coil. The interval 313–332 (SDNQAAAQESKARHDESLKA) is disordered. An SMC hinge domain is found at 538–650 (EGVYGTLAEL…PNLQVASQYA (113 aa)). Residues 654–676 (GVNATTPEGDRSDKRGALTGGFH) are disordered. Positions 684–1091 (DAVKNLAKWR…EEAKHSVENY (408 aa)) form a coiled coil.

This sequence belongs to the SMC family. SMC3 subfamily.

The protein resides in the nucleus. In terms of biological role, involved in chromosome segregation in mitosis. In Emericella nidulans (strain FGSC A4 / ATCC 38163 / CBS 112.46 / NRRL 194 / M139) (Aspergillus nidulans), this protein is Chromosome segregation protein sudA (sudA).